The chain runs to 888 residues: Potassium channel AKT6 (888 aa).

Residues M1–E84 lie on the Cytoplasmic side of the membrane. Residues G10–D31 form a disordered region. The helical transmembrane segment at T85–L105 threads the bilayer. Over Q106–S113 the chain is Extracellular. Residues I114–A134 traverse the membrane as a helical segment. Topologically, residues F135 to A155 are cytoplasmic. A helical membrane pass occupies residues S156–L176. At H177 to G184 the chain is on the extracellular side. Residues I185–E205 traverse the membrane as a helical; Voltage-sensor segment. Residues K206–K219 are Cytoplasmic-facing. Residues L220–A240 form a helical membrane-spanning segment. At H241–N267 the chain is on the extracellular side. The pore-forming intramembrane region spans T268–G287. Residues V288–R291 are Extracellular-facing. Residues E292–G312 form a helical membrane-spanning segment. Residues N313–P888 are Cytoplasmic-facing. Residue L398–K519 participates in a nucleoside 3',5'-cyclic phosphate binding. ANK repeat units follow at residues D543–E572, D576–I605, E609–L638, S640–L669, and N673–W702. A KHA domain is found at R822–P888.

Belongs to the potassium channel family. Plant (TC 1.A.1.4) subfamily. In terms of assembly, the potassium channel is probably composed of a homo- or heterotetrameric complex of pore-forming subunits. As to expression, predominantly expressed in flowers; especially in pollen.

The protein resides in the membrane. Functionally, highly selective inward-rectifying potassium channel that could mediate potassium uptake in the pollen membrane. Plays an important role in pollen tube development. Assuming opened or closed conformations in response to the voltage difference across the membrane, the channel is activated by hyperpolarization. May interact with the cytoskeleton or with regulatory proteins. The chain is Potassium channel AKT6 (AKT6) from Arabidopsis thaliana (Mouse-ear cress).